A 116-amino-acid polypeptide reads, in one-letter code: uncharacterized protein (116 aa).

Residues 52–72 (VFCSANSVPLYLLLLTSALHF) form a helical membrane-spanning segment.

It is found in the mitochondrion membrane. This is an uncharacterized protein from Arabidopsis thaliana (Mouse-ear cress).